Reading from the N-terminus, the 197-residue chain is Probable GTP-binding protein EngB (197 aa).

In terms of domain architecture, EngB-type G spans 22–194; the sequence is DLPEIAFAGR…LETIARMTGI (173 aa). GTP is bound by residues 30–37, 57–61, 75–78, 142–145, and 173–175; these read GRSNVGKS, GKTRL, DLPG, TKAD, and FST. Mg(2+) is bound by residues serine 37 and threonine 59.

This sequence belongs to the TRAFAC class TrmE-Era-EngA-EngB-Septin-like GTPase superfamily. EngB GTPase family. Mg(2+) is required as a cofactor.

Its function is as follows. Necessary for normal cell division and for the maintenance of normal septation. The chain is Probable GTP-binding protein EngB from Desulfosudis oleivorans (strain DSM 6200 / JCM 39069 / Hxd3) (Desulfococcus oleovorans).